Reading from the N-terminus, the 117-residue chain is Immunoglobulin kappa variable 1-5 (117 aa).

An N-terminal signal peptide occupies residues 1 to 22 (MDMRVPAQLLGLLLLWLPGAKC). The tract at residues 23 to 45 (DIQMTQSPSTLSASVGDRVTITC) is framework-1. Positions 24–117 (IQMTQSPSTL…YYCQQYNSYS (94 aa)) constitute an Ig-like domain. Cysteine 45 and cysteine 110 form a disulfide bridge. The interval 46-56 (RASQSISSWLA) is complementarity-determining-1. The interval 57–71 (WYQQKPGKAPKLLIY) is framework-2. The tract at residues 72–78 (KASSLES) is complementarity-determining-2. Positions 79-110 (GVPSRFSGSGSGTEFTLTISSLQPDDFATYYC) are framework-3. A complementarity-determining-3 region spans residues 111-117 (QQYNSYS).

As to quaternary structure, immunoglobulins are composed of two identical heavy chains and two identical light chains; disulfide-linked.

It localises to the secreted. The protein localises to the cell membrane. In terms of biological role, v region of the variable domain of immunoglobulin light chains that participates in the antigen recognition. Immunoglobulins, also known as antibodies, are membrane-bound or secreted glycoproteins produced by B lymphocytes. In the recognition phase of humoral immunity, the membrane-bound immunoglobulins serve as receptors which, upon binding of a specific antigen, trigger the clonal expansion and differentiation of B lymphocytes into immunoglobulins-secreting plasma cells. Secreted immunoglobulins mediate the effector phase of humoral immunity, which results in the elimination of bound antigens. The antigen binding site is formed by the variable domain of one heavy chain, together with that of its associated light chain. Thus, each immunoglobulin has two antigen binding sites with remarkable affinity for a particular antigen. The variable domains are assembled by a process called V-(D)-J rearrangement and can then be subjected to somatic hypermutations which, after exposure to antigen and selection, allow affinity maturation for a particular antigen. The protein is Immunoglobulin kappa variable 1-5 of Homo sapiens (Human).